A 656-amino-acid polypeptide reads, in one-letter code: UvrABC system protein B (656 aa).

The Helicase ATP-binding domain maps to 29–414; sequence KLSEFKTKQQ…SLSQNNVIEQ (386 aa). Residue 42 to 49 coordinates ATP; sequence GATGTGKT. A Beta-hairpin motif is present at residues 95–118; the sequence is YFDFYQPEAYLPSKGIYIEKSATV. The region spanning 434-596 is the Helicase C-terminal domain; that stretch reads QVEDLIEEII…KTPKTVVKPL (163 aa). In terms of domain architecture, UVR spans 614 to 649; the sequence is AALIKQLTKEMKKAAANQNYELAIEIRDSIFELEKE.

Belongs to the UvrB family. In terms of assembly, forms a heterotetramer with UvrA during the search for lesions. Interacts with UvrC in an incision complex.

Its subcellular location is the cytoplasm. The UvrABC repair system catalyzes the recognition and processing of DNA lesions. A damage recognition complex composed of 2 UvrA and 2 UvrB subunits scans DNA for abnormalities. Upon binding of the UvrA(2)B(2) complex to a putative damaged site, the DNA wraps around one UvrB monomer. DNA wrap is dependent on ATP binding by UvrB and probably causes local melting of the DNA helix, facilitating insertion of UvrB beta-hairpin between the DNA strands. Then UvrB probes one DNA strand for the presence of a lesion. If a lesion is found the UvrA subunits dissociate and the UvrB-DNA preincision complex is formed. This complex is subsequently bound by UvrC and the second UvrB is released. If no lesion is found, the DNA wraps around the other UvrB subunit that will check the other stand for damage. The chain is UvrABC system protein B from Mycoplasma genitalium (strain ATCC 33530 / DSM 19775 / NCTC 10195 / G37) (Mycoplasmoides genitalium).